The chain runs to 427 residues: Zinc finger protein 134 (427 aa).

Lys-20 participates in a covalent cross-link: Glycyl lysine isopeptide (Lys-Gly) (interchain with G-Cter in SUMO2). The C2H2-type 1 zinc finger occupies 50–72 (LPCDICGPILKDILHLDEHQGTH). The C2H2-type 2; degenerate zinc finger occupies 78-100 (HTCGACGRQFWFSANLHQYQKCY). Glycyl lysine isopeptide (Lys-Gly) (interchain with G-Cter in SUMO2) cross-links involve residues Lys-135 and Lys-139. 9 consecutive C2H2-type zinc fingers follow at residues 176-198 (YKCS…QRIH), 204-226 (YECS…QRIH), 232-254 (YECS…KRIH), 260-282 (YKCN…QRVH), 288-310 (YKCS…ESIH), 316-338 (YDCS…QRIH), 344-366 (FECI…QRVH), 372-394 (FVCS…QRVH), and 400-422 (YECS…QKVH).

The protein belongs to the krueppel C2H2-type zinc-finger protein family.

It localises to the nucleus. Its function is as follows. May be involved in transcriptional regulation. The chain is Zinc finger protein 134 (ZNF134) from Homo sapiens (Human).